The following is a 797-amino-acid chain: Protocadherin beta-9 (797 aa).

Positions 1-26 are cleaved as a signal peptide; the sequence is MKTRGFSFPRQRQVLFLFLFWGVSLA. Residues 27-690 lie on the Extracellular side of the membrane; it reads GSGFGRYSVT…AQADSLTVYL (664 aa). Cadherin domains lie at 35 to 133, 138 to 242, 247 to 347, 352 to 451, and 456 to 561; these read VTEE…SPVF, MVLK…APQF, YETQ…PPEL, LSNS…APAF, and YTLF…SPFV. The N-linked (GlcNAc...) asparagine glycan is linked to Asn-169. A glycan (N-linked (GlcNAc...) asparagine) is linked at Asn-418. The N-linked (GlcNAc...) asparagine glycan is linked to Asn-567. Residues 568–671 form the Cadherin 6 domain; that stretch reads GSAPCTELVP…LVDGFSQPYL (104 aa). Residues 691 to 711 form a helical membrane-spanning segment; the sequence is VVALASVSSLFLLSVLLFVAV. Topologically, residues 712–797 are cytoplasmic; that stretch reads RLCRRSRAAS…TLHNSFGFNY (86 aa).

It localises to the cell membrane. In terms of biological role, potential calcium-dependent cell-adhesion protein. May be involved in the establishment and maintenance of specific neuronal connections in the brain. The polypeptide is Protocadherin beta-9 (PCDHB9) (Pan troglodytes (Chimpanzee)).